The sequence spans 448 residues: MSLIVSDRFRIVVGLGKSGMSLVRFLANRGVSFAVADTRENPPELATLRRDYPQVEVRCGELDVDFLCRADELYVSPGLALATPALQQAHARGAKLSGDIELFARYAKAPVIAITGSNAKSTVTTLVGEMAAAAGKRVAVGGNLGTPALDLLSDDVELYVMELSSFQLETTDQLNAEVATVLNISEDHMDRYSGLPAYHLAKHRIFRGARQVVVNRQDALSRPLIGEGLPCWTFGLNKPDFHGFGLREENGEKFLAFQFENLMPVSELKVRGAHNQANALAALALGHAVGLPFDAMLSSLREFTGLEHRCQWLRERNGVDYYNDSKATNVGAALAAIEGLGSDIGGKLVLIAGGDGKGADFSGLRAPVAKYCRAAVLLGRDAELIAQALGDAVPLIRVDTVQAAAERSAELAQRGDAVLLSPACASLDMFKNYEERGRVFAQAVECLS.

ATP is bound at residue 116-122 (GSNAKST).

This sequence belongs to the MurCDEF family.

The protein localises to the cytoplasm. It carries out the reaction UDP-N-acetyl-alpha-D-muramoyl-L-alanine + D-glutamate + ATP = UDP-N-acetyl-alpha-D-muramoyl-L-alanyl-D-glutamate + ADP + phosphate + H(+). The protein operates within cell wall biogenesis; peptidoglycan biosynthesis. Functionally, cell wall formation. Catalyzes the addition of glutamate to the nucleotide precursor UDP-N-acetylmuramoyl-L-alanine (UMA). The protein is UDP-N-acetylmuramoylalanine--D-glutamate ligase of Pseudomonas syringae pv. tomato (strain ATCC BAA-871 / DC3000).